Here is a 410-residue protein sequence, read N- to C-terminus: Beta-arrestin-2 (410 aa).

Position 48 is a phosphotyrosine (tyrosine 48). Proline 176 and proline 181 each carry hydroxyproline; by PHD2. The interaction with TRAF6 stretch occupies residues 241–410; sequence ADICLFSTAQ…KDDDCDDQFC (170 aa). Serine 361 is subject to Phosphoserine. Positions 378 to 410 are interaction with AP2B1; the sequence is DTNYATDDDIVFEDFARLRLKGMKDDDCDDQFC. The residue at position 383 (threonine 383) is a Phosphothreonine; by CaMK2. The short motif at 386–396 is the [DE]-X(1,2)-F-X-X-[FL]-X-X-X-R motif element; sequence DIVFEDFARLR.

Belongs to the arrestin family. Homooligomer; the self-association is mediated by InsP6-binding. Heterooligomer with ARRB1; the association is mediated by InsP6-binding. Interacts with ADRB2 and CHRM2. Interacts with PDE4A. Interacts with PDE4D. Interacts with MAPK10, MAPK1 and MAPK3. Interacts with DRD2. Interacts with FSHR. Interacts with CLTC. Interacts with HTR2C. Interacts with CCR5. Interacts with CXCR4. Interacts with SRC. Interacts with DUSP16; the interaction is interrupted by stimulation of AGTR1 and activation of MAPK10. Interacts with CHUK; the interaction is enhanced stimulation of ADRB2. Interacts with RELA. Interacts with MDM2; the interaction is enhanced by activation of GPCRs. Interacts with SLC9A5. Interacts with TRAF6. Interacts with IGF1R. Interacts with ENG. Interacts with KIR2DL1, KIR2DL3 and KIR2DL4. Interacts with LDLR. Interacts with AP2B1. Interacts with C5AR1. Interacts with RAF1. Interacts with MAP2K1. Interacts with MAPK1. Interacts with MAPK10; the interaction enhances MAPK10 activation by MAP3K5. Interacts with MAP2K4; the interaction is enhanced by presence of MAP3K5 and MAPK10. Interacts with MAP3K5. Interacts with AKT1. Interacts with IKBKB and MAP3K14. Interacts with SMO (activated). Interacts with GSK3A and GSK3B. Associates with protein phosphatase 2A (PP2A). Interacts with CXCR4; the interaction is dependent on C-terminal phosphorylation of CXCR4 and allows activation of MAPK1 and MAPK3. Interacts with GPR143. Interacts with HCK and CXCR1 (phosphorylated). Interacts with ACKR3 and ACKR4. Interacts with ARRDC1; the interaction is direct. Interacts with GPR61, GPR62 and GPR135. Interacts (via NACHT and LRR domains) with NLRP3; this interaction is direct and inducible by omega-3 polyunsaturated fatty acids (PUFAs). Interacts with FFAR4 (via C-terminus); this interaction is stimulated by long-chain fatty acids (LCFAs). Interacts with GPR35. Interacts with GPR84. Interacts with TIGIT; this interaction inhibits the NF-kappa-B pathway. Interacts with TGFBR3. Post-translationally, phosphorylated at Thr-383 in the cytoplasm; probably dephosphorylated at the plasma membrane. The phosphorylation does not regulate internalization and recycling of ADRB2, interaction with clathrin or AP2B1. In terms of processing, the ubiquitination status appears to regulate the formation and trafficking of beta-arrestin-GPCR complexes and signaling. Ubiquitination appears to occur GPCR-specific. Ubiquitinated by MDM2; the ubiquitination is required for rapid internalization of ADRB2. Deubiquitinated by USP33; the deubiquitination leads to a dissociation of the beta-arrestin-GPCR complex. Stimulation of a class A GPCR, such as ADRB2, induces transient ubiquitination and subsequently promotes association with USP33. Stimulation of a class B GPCR promotes a sustained ubiquitination. Deubiquitinated by USP20; allowing USP20 to deubiquitinate TRAF6 leading to inhibition of NF-kappa-B signaling. Hydroxylation by PHD2 modulates the rate of internalization by slowing down recruitment to the plasma membrane and inhibiting subsequent co-internalization with class A receptors. Predominantly localized in neuronal tissues and in the spleen.

The protein localises to the cytoplasm. It localises to the nucleus. Its subcellular location is the cell membrane. The protein resides in the membrane. It is found in the clathrin-coated pit. The protein localises to the cytoplasmic vesicle. Functions in regulating agonist-mediated G-protein coupled receptor (GPCR) signaling by mediating both receptor desensitization and resensitization processes. During homologous desensitization, beta-arrestins bind to the GPRK-phosphorylated receptor and sterically preclude its coupling to the cognate G-protein; the binding appears to require additional receptor determinants exposed only in the active receptor conformation. The beta-arrestins target many receptors for internalization by acting as endocytic adapters (CLASPs, clathrin-associated sorting proteins) and recruiting the GPRCs to the adapter protein 2 complex 2 (AP-2) in clathrin-coated pits (CCPs). However, the extent of beta-arrestin involvement appears to vary significantly depending on the receptor, agonist and cell type. Internalized arrestin-receptor complexes traffic to intracellular endosomes, where they remain uncoupled from G-proteins. Two different modes of arrestin-mediated internalization occur. Class A receptors, like ADRB2, OPRM1, ENDRA, D1AR and ADRA1B dissociate from beta-arrestin at or near the plasma membrane and undergo rapid recycling. Class B receptors, like AVPR2, AGTR1, NTSR1, TRHR and TACR1 internalize as a complex with arrestin and traffic with it to endosomal vesicles, presumably as desensitized receptors, for extended periods of time. Receptor resensitization then requires that receptor-bound arrestin is removed so that the receptor can be dephosphorylated and returned to the plasma membrane. Mediates endocytosis of CCR7 following ligation of CCL19 but not CCL21. Involved in internalization of P2RY1, P2RY4, P2RY6 and P2RY11 and ATP-stimulated internalization of P2RY2. Involved in phosphorylation-dependent internalization of OPRD1 and subsequent recycling or degradation. Involved in ubiquitination of IGF1R. Beta-arrestins function as multivalent adapter proteins that can switch the GPCR from a G-protein signaling mode that transmits short-lived signals from the plasma membrane via small molecule second messengers and ion channels to a beta-arrestin signaling mode that transmits a distinct set of signals that are initiated as the receptor internalizes and transits the intracellular compartment. Acts as a signaling scaffold for MAPK pathways such as MAPK1/3 (ERK1/2) and MAPK10 (JNK3). ERK1/2 and JNK3 activated by the beta-arrestin scaffold are largely excluded from the nucleus and confined to cytoplasmic locations such as endocytic vesicles, also called beta-arrestin signalosomes. Acts as a signaling scaffold for the AKT1 pathway. GPCRs for which the beta-arrestin-mediated signaling relies on both ARRB1 and ARRB2 (codependent regulation) include ADRB2, F2RL1 and PTH1R. For some GPCRs the beta-arrestin-mediated signaling relies on either ARRB1 or ARRB2 and is inhibited by the other respective beta-arrestin form (reciprocal regulation). Increases ERK1/2 signaling in AGTR1- and AVPR2-mediated activation (reciprocal regulation). Involved in CCR7-mediated ERK1/2 signaling involving ligand CCL19. Is involved in type-1A angiotensin II receptor/AGTR1-mediated ERK activity. Is involved in type-1A angiotensin II receptor/AGTR1-mediated MAPK10 activity. Is involved in dopamine-stimulated AKT1 activity in the striatum by disrupting the association of AKT1 with its negative regulator PP2A. Involved in AGTR1-mediated chemotaxis. Appears to function as signaling scaffold involved in regulation of MIP-1-beta-stimulated CCR5-dependent chemotaxis. Involved in attenuation of NF-kappa-B-dependent transcription in response to GPCR or cytokine stimulation by interacting with and stabilizing CHUK. Suppresses UV-induced NF-kappa-B-dependent activation by interacting with CHUK. The function is promoted by stimulation of ADRB2 and dephosphorylation of ARRB2. Involved in IL8-mediated granule release in neutrophils. Involved in p53/TP53-mediated apoptosis by regulating MDM2 and reducing the MDM2-mediated degradation of p53/TP53. May serve as nuclear messenger for GPCRs. Upon stimulation of OR1D2, may be involved in regulation of gene expression during the early processes of fertilization. Also involved in regulation of receptors other than GPCRs. Involved in endocytosis of TGFBR2 and TGFBR3 and down-regulates TGF-beta signaling such as NF-kappa-B activation. Involved in endocytosis of low-density lipoprotein receptor/LDLR. Involved in endocytosis of smoothened homolog/Smo, which also requires GRK2. Involved in endocytosis of SLC9A5. Involved in endocytosis of ENG and subsequent TGF-beta-mediated ERK activation and migration of epithelial cells. Involved in Toll-like receptor and IL-1 receptor signaling through the interaction with TRAF6 which prevents TRAF6 autoubiquitination and oligomerization required for activation of NF-kappa-B and JUN. Involved in insulin resistance by acting as insulin-induced signaling scaffold for SRC, AKT1 and INSR. Involved in regulation of inhibitory signaling of natural killer cells by recruiting PTPN6 and PTPN11 to KIR2DL1. Involved in the internalization of the atypical chemokine receptor ACKR3. Acts as an adapter protein coupling FFAR4 receptor to specific downstream signaling pathways, as well as mediating receptor endocytosis. During the activation step of NLRP3 inflammasome, directly associates with NLRP3 leading to inhibition of pro-inflammatory cytokine release and inhibition of inflammation. This chain is Beta-arrestin-2 (Arrb2), found in Rattus norvegicus (Rat).